A 268-amino-acid polypeptide reads, in one-letter code: Microtubule-associated protein RP/EB family member 1 (268 aa).

At Ala-2 the chain carries N-acetylalanine. The Calponin-homology (CH) domain occupies 14 to 116 (NLSRHDMLAW…FVQWFKKFFD (103 aa)). N6-crotonyllysine is present on Lys-66. The residue at position 124 (Tyr-124) is a Phosphotyrosine. The tract at residues 124 to 268 (YDPVAARQGQ…GGPQEEQEEY (145 aa)) is interaction with MTUS2/TIP150. The disordered stretch occupies residues 146–180 (LSKPKKPLGSSTAAPQRPIATQRTTAAPKAGPGMV). The segment covering 154–170 (GSSTAAPQRPIATQRTT) has biased composition (polar residues). Residue Ser-155 is modified to Phosphoserine. Positions 185 to 255 (GVGNGDDEAA…LYATDEGFVI (71 aa)) constitute an EB1 C-terminal domain. The tract at residues 206 to 211 (TVEDLE) is interaction with APC. Residues 208-268 (EDLEKERDFY…GGPQEEQEEY (61 aa)) form a DCTN1-binding region. The residue at position 220 (Lys-220) is an N6-acetyllysine. The segment at 220-242 (KLRNIELICQENEGENDPVLQRI) is APC-binding. Residues 232–255 (EGENDPVLQRIVDILYATDEGFVI) form an interaction with SKA1 region.

Belongs to the MAPRE family. As to quaternary structure, homodimer. Heterodimer with MAPRE3. Interacts (via C-terminal residues 206-211) with APC (via C-terminal residues 2674-2845); the interaction inhibits association with and bundling of F-actin. Interacts with DCTN1, DIAPH1 and DIAPH2. Interacts with DCTN2, TERF1 and dynein intermediate chain. Interacts with CLASP2, DST, KIF2C and STIM1; probably required for their targeting to the growing microtubule plus ends. Interacts with MTUS2; interaction is direct and probably targets MTUS2 to microtubules. Interacts (via C-terminus) with SKA1 (via SXIP motif); the interaction is direct and stabilizes the kinetochore-microtubule attachment of the SKA1 complex. Interacts with APC2. Interacts with CLASP1. Interacts (via C-terminus) with CLIP1. Interacts with SLAIN2 and SLAIN1. Interacts with MACF1. Interacts with KIF18B; this interaction is required for efficient accumulation of KIF18B at microtubule plus ends. Interacts with MISP. Interacts with RABL2/RABL2A; binds preferentially to GTP-bound RABL2. Interacts with KCNAB2. Interacts with KNSTRN. Interacts with NCKAP5L. Interacts with AKAP9. Interacts with PDE4DIP isoform 2/MMG8/SMYLE; this interaction is required for its recruitment to the Golgi apparatus. May form a pericentrosomal complex with AKAP9, CDK5RAP2 and PDE4DIP isoform 2/MMG8/SMYLE; within this complex, MAPRE1 binding to CDK5RAP2 may be mediated by PDE4DIP. Contrary to other mammalian species, does not interact with CDK5RAP2, possibly due to the lack of conservation of the MAPRE1-binding motif in mouse CDK5RAP2. Interacts with AKNA. Interacts with GAS2L1, GAS2L2, and GAS2L3. Interacts with RARRES1 and AGBL2. Acetylation at Lys-220 by KAT2B/PCAF promotes dynamic kinetochore-microtubule interactions in early mitosis. In terms of processing, crotonylated by KAT5 during mitosis, promoting astral microtubule plasticity and dynamic connection between astral microtubules and the cortex during mitotic chromosome segregation, thereby ensuring accurate spindle positioning in mitosis. Decrotonylated by HDAC3. As to expression, expressed within the midpiece of sperm tail (at protein level).

The protein resides in the cytoplasm. It is found in the cytoskeleton. Its subcellular location is the microtubule organizing center. The protein localises to the centrosome. It localises to the spindle. The protein resides in the spindle pole. Functionally, plus-end tracking protein (+TIP) that binds to the plus-end of microtubules and regulates the dynamics of the microtubule cytoskeleton. Recruits other +TIP proteins to microtubules by binding to a conserved Ser-X-Leu-Pro (SXLP) motif in their polypeptide chains. Promotes cytoplasmic microtubule nucleation and elongation. Involved in mitotic spindle positioning by stabilizing microtubules and promoting dynamic connection between astral microtubules and the cortex during mitotic chromosome segregation. Assists chromosome alignment in metaphase by recruiting the SKA complex to the spindle and stabilizing its interactions with microtubule bundles (K-fibers). Also acts as a regulator of minus-end microtubule organization: interacts with the complex formed by AKAP9 and PDE4DIP, leading to recruit CAMSAP2 to the Golgi apparatus, thereby tethering non-centrosomal minus-end microtubules to the Golgi, an important step for polarized cell movement. Promotes elongation of CAMSAP2-decorated microtubule stretches on the minus-end of microtubules. Acts as a regulator of autophagosome transport via interaction with CAMSAP2. Functions downstream of Rho GTPases and DIAPH1 in stable microtubule formation. May play a role in cell migration. This Mus musculus (Mouse) protein is Microtubule-associated protein RP/EB family member 1 (Mapre1).